We begin with the raw amino-acid sequence, 714 residues long: Pre-mRNA-splicing factor CLF1 (714 aa).

HAT repeat units follow at residues 48-80 (SFQL…WEVK), 83-115 (HDFP…FELS), 117-149 (KNIT…TEET), 151-182 (KNYQ…YEKR), 184-215 (DEYD…FEMN), 265-305 (KEYE…FEKS), 315-347 (SIMI…ILQQ), 349-384 (DNNE…IWVK), 394-430 (GSIE…FEIR), 435-470 (NGLA…LEQK), 472-510 (GEWD…FEKN), and 555-586 (MRYA…FESS).

This sequence belongs to the crooked-neck family. Associated with the spliceosome.

It is found in the nucleus. In terms of biological role, involved in pre-mRNA splicing and cell cycle progression. Required for the spliceosome assembly and initiation of the DNA replication. This chain is Pre-mRNA-splicing factor CLF1 (CLF1), found in Debaryomyces hansenii (strain ATCC 36239 / CBS 767 / BCRC 21394 / JCM 1990 / NBRC 0083 / IGC 2968) (Yeast).